The primary structure comprises 435 residues: NADH-quinone oxidoreductase subunit D (435 aa).

It belongs to the complex I 49 kDa subunit family. NDH-1 is composed of 14 different subunits. Subunits NuoB, C, D, E, F, and G constitute the peripheral sector of the complex.

The protein localises to the cell inner membrane. The enzyme catalyses a quinone + NADH + 5 H(+)(in) = a quinol + NAD(+) + 4 H(+)(out). Its function is as follows. NDH-1 shuttles electrons from NADH, via FMN and iron-sulfur (Fe-S) centers, to quinones in the respiratory chain. The immediate electron acceptor for the enzyme in this species is believed to be ubiquinone. Couples the redox reaction to proton translocation (for every two electrons transferred, four hydrogen ions are translocated across the cytoplasmic membrane), and thus conserves the redox energy in a proton gradient. The chain is NADH-quinone oxidoreductase subunit D from Xylella fastidiosa (strain M12).